The chain runs to 942 residues: Inter-alpha-trypsin inhibitor heavy chain H5 (942 aa).

The first 16 residues, 1-16, serve as a signal peptide directing secretion; it reads MLLLLGLCLGLSLCVG. One can recognise a VIT domain in the interval 35–161; it reads VPRQVRLLQR…KAAFFLSYEE (127 aa). N-linked (GlcNAc...) asparagine glycosylation is found at Asn97 and Asn127. 2 disordered regions span residues 116 to 136 and 208 to 227; these read KKSGDRVKEKRNKTTEENGEK and SRQRGSGRGEDDSGPPPSTV. N-linked (GlcNAc...) asparagine glycans are attached at residues Asn231, Asn421, and Asn508. Positions 295 to 478 constitute a VWFA domain; that stretch reads NVVFVLDSSA…SQLIGFYDEI (184 aa). Residues 550 to 571 are disordered; it reads QKAGKDVTGSPRPGGDGEGDTN. Asn776, Asn795, and Asn862 each carry an N-linked (GlcNAc...) asparagine glycan.

It belongs to the ITIH family. In terms of tissue distribution, abundantly expressed in placenta. Less abundant expression in mammary gland and ovary. Expression is barely detectable levels in all other tissues tested.

Its subcellular location is the secreted. Functionally, may act as a tumor suppressor. This is Inter-alpha-trypsin inhibitor heavy chain H5 (ITIH5) from Homo sapiens (Human).